Here is a 513-residue protein sequence, read N- to C-terminus: V-type proton ATPase subunit B (513 aa).

ATP is bound at residue Arg375. Positions 484–503 are enriched in basic and acidic residues; the sequence is ADRKGKGKDKPTTKDTRDTA. Positions 484–513 are disordered; the sequence is ADRKGKGKDKPTTKDTRDTAAPEEENLIDA. The span at 504–513 shows a compositional bias: acidic residues; the sequence is APEEENLIDA.

Belongs to the ATPase alpha/beta chains family. V-ATPase is a heteromultimeric enzyme composed of a peripheral catalytic V1 complex (components A to H) attached to an integral membrane V0 proton pore complex (components: a, c, c', c'', d, e, f and VOA1).

The protein localises to the vacuole membrane. Functionally, non-catalytic subunit of the V1 complex of vacuolar(H+)-ATPase (V-ATPase), a multisubunit enzyme composed of a peripheral complex (V1) that hydrolyzes ATP and a membrane integral complex (V0) that translocates protons. V-ATPase is responsible for acidifying and maintaining the pH of intracellular compartments. In Neurospora crassa (strain ATCC 24698 / 74-OR23-1A / CBS 708.71 / DSM 1257 / FGSC 987), this protein is V-type proton ATPase subunit B.